Consider the following 80-residue polypeptide: Defensin-like protein 207 (80 aa).

Positions 1–29 are cleaved as a signal peptide; that stretch reads MAKNLNSVSFIVLLLVLLVASTEILKSDA. Intrachain disulfides connect Cys-38–Cys-64, Cys-50–Cys-75, and Cys-54–Cys-77.

This sequence belongs to the DEFL family.

Its subcellular location is the secreted. The protein is Defensin-like protein 207 of Arabidopsis thaliana (Mouse-ear cress).